Here is a 316-residue protein sequence, read N- to C-terminus: tRNA dimethylallyltransferase (316 aa).

Glycine 17 to threonine 24 is a binding site for ATP. Threonine 19–threonine 24 lines the substrate pocket. Interaction with substrate tRNA stretches follow at residues aspartate 42–leucine 45, glutamine 166–arginine 170, arginine 247–arginine 252, and lysine 280–arginine 287.

This sequence belongs to the IPP transferase family. As to quaternary structure, monomer. The cofactor is Mg(2+).

The catalysed reaction is adenosine(37) in tRNA + dimethylallyl diphosphate = N(6)-dimethylallyladenosine(37) in tRNA + diphosphate. Catalyzes the transfer of a dimethylallyl group onto the adenine at position 37 in tRNAs that read codons beginning with uridine, leading to the formation of N6-(dimethylallyl)adenosine (i(6)A). In Shigella dysenteriae serotype 1 (strain Sd197), this protein is tRNA dimethylallyltransferase.